Here is a 220-residue protein sequence, read N- to C-terminus: Metalloproteinase inhibitor 2 (220 aa).

The first 26 residues, 1–26 (MGAAARSLPLAFCLLLLGTLLPRADA), serve as a signal peptide directing secretion. Position 27 (Cys27) interacts with Zn(2+). The segment at 27–30 (CSCS) is involved in metalloproteinase-binding. 6 cysteine pairs are disulfide-bonded: Cys27-Cys98, Cys29-Cys127, Cys39-Cys152, Cys154-Cys201, Cys159-Cys164, and Cys172-Cys193. Positions 27 to 152 (CSCSPVHPQQ…SLNHRYQMGC (126 aa)) constitute an NTR domain.

It belongs to the protease inhibitor I35 (TIMP) family. In terms of assembly, interacts (via the C-terminal) with MMP2 (via the C-terminal PEX domain); the interaction inhibits the MMP2 activity. The activity of TIMP2 is dependent on the presence of disulfide bonds.

The protein localises to the secreted. Its function is as follows. Complexes with metalloproteinases (such as collagenases) and irreversibly inactivates them by binding to their catalytic zinc cofactor. This Bos taurus (Bovine) protein is Metalloproteinase inhibitor 2 (TIMP2).